A 458-amino-acid chain; its full sequence is Putative long chain fatty acid-CoA ligase VraA (458 aa).

It belongs to the ATP-dependent AMP-binding enzyme family.

The chain is Putative long chain fatty acid-CoA ligase VraA (vraA) from Staphylococcus aureus (strain MRSA252).